The sequence spans 550 residues: Neuronal acetylcholine receptor subunit alpha-9-II (550 aa).

The first 20 residues, 1–20 (MRKMVPVVCFATMLLQVAHS), serve as a signal peptide directing secretion. The Extracellular segment spans residues 21 to 233 (AQGRYAQQLL…YTVLLQRRSS (213 aa)). An N-linked (GlcNAc...) asparagine glycan is attached at N52. C150 and C164 are oxidised to a cystine. Residue N165 is glycosylated (N-linked (GlcNAc...) asparagine). C214 and C215 are oxidised to a cystine. The next 3 membrane-spanning stretches (helical) occupy residues 234–254 (FYIFNLLLPCFLISFLAPLGF), 264–284 (VSLGVTVLLALTVFQLMVAES), and 298–318 (YIATMTMITASTALTIFIMNI). Topologically, residues 319 to 528 (HFCGAEAKPV…WKRVAKVMDR (210 aa)) are cytoplasmic. A disordered region spans residues 357–439 (TSSSSSSSSS…HLSSSKYEGF (83 aa)). Over residues 358–367 (SSSSSSSSSS) the composition is skewed to low complexity. Residues 413–422 (RHPKPRHQHH) are compositionally biased toward basic residues. Residues 529–549 (FFMWIFFIMVFLMSILIIGKA) traverse the membrane as a helical segment.

This sequence belongs to the ligand-gated ion channel (TC 1.A.9) family. Acetylcholine receptor (TC 1.A.9.1) subfamily. Expressed in the brain, liver, olfactory mucosa, pituitary gland and hair cells of the saccule.

It localises to the postsynaptic cell membrane. The protein localises to the cell membrane. This is Neuronal acetylcholine receptor subunit alpha-9-II from Oncorhynchus mykiss (Rainbow trout).